Reading from the N-terminus, the 629-residue chain is tRNA uridine 5-carboxymethylaminomethyl modification enzyme MnmG (629 aa).

Residue G13 to G18 participates in FAD binding. NAD(+) is bound at residue G273 to F287.

This sequence belongs to the MnmG family. In terms of assembly, homodimer. Heterotetramer of two MnmE and two MnmG subunits. FAD is required as a cofactor.

It localises to the cytoplasm. Functionally, NAD-binding protein involved in the addition of a carboxymethylaminomethyl (cmnm) group at the wobble position (U34) of certain tRNAs, forming tRNA-cmnm(5)s(2)U34. In Shewanella baltica (strain OS155 / ATCC BAA-1091), this protein is tRNA uridine 5-carboxymethylaminomethyl modification enzyme MnmG.